Here is a 175-residue protein sequence, read N- to C-terminus: Ribulose bisphosphate carboxylase small subunit, chloroplastic 2 (175 aa).

The transit peptide at 1–46 (MAPTVMASSATSVAPFQGLKSTAGLPVSRRSTNSGFGNVSNGGRIK) directs the protein to the chloroplast.

The protein belongs to the RuBisCO small chain family. Heterohexadecamer of 8 large and 8 small subunits.

The protein localises to the plastid. It is found in the chloroplast. Functionally, ruBisCO catalyzes two reactions: the carboxylation of D-ribulose 1,5-bisphosphate, the primary event in carbon dioxide fixation, as well as the oxidative fragmentation of the pentose substrate. Both reactions occur simultaneously and in competition at the same active site. Although the small subunit is not catalytic it is essential for maximal activity. In Oryza sativa subsp. japonica (Rice), this protein is Ribulose bisphosphate carboxylase small subunit, chloroplastic 2.